The sequence spans 199 residues: Biogenesis of lysosome-related organelles complex 1 subunit 3 (199 aa).

Basic residues predominate over residues 1–11 (MASQSRRRRPL). Residues 1-81 (MASQSRRRRP…AAPRDLPPLV (81 aa)) are disordered. A compositionally biased stretch (acidic residues) spans 23 to 38 (AETDSELSASSEEEEL). Low complexity predominate over residues 39-54 (YLGPSGPTRGRPTGLR). Thr-62 carries the phosphothreonine modification. Ser-64 carries the post-translational modification Phosphoserine.

This sequence belongs to the BLOC1S3 family. Component of the biogenesis of lysosome-related organelles complex 1 (BLOC-1) composed of BLOC1S1, BLOC1S2, BLOC1S3, BLOC1S4, BLOC1S5, BLOC1S6, DTNBP1/BLOC1S7 and SNAPIN/BLOC1S8. Octamer composed of one copy each BLOC1S1, BLOC1S2, BLOC1S3, BLOC1S4, BLOC1S5, BLOC1S6, DTNBP1/BLOC1S7 and SNAPIN/BLOC1S8. The BLOC-1 complex associates with the AP-3 protein complex and membrane protein cargos. Interacts directly with BLOC1S2. Interacts with BLOC1S4, BLOC1S5 and BLOC1S6. Post-translationally, phosphorylated.

The protein resides in the cytoplasm. Its function is as follows. Component of the BLOC-1 complex, a complex that is required for normal biogenesis of lysosome-related organelles (LRO), such as platelet dense granules and melanosomes. In concert with the AP-3 complex, the BLOC-1 complex is required to target membrane protein cargos into vesicles assembled at cell bodies for delivery into neurites and nerve terminals. The BLOC-1 complex, in association with SNARE proteins, is also proposed to be involved in neurite extension. Plays a role in intracellular vesicle trafficking. This Sus scrofa (Pig) protein is Biogenesis of lysosome-related organelles complex 1 subunit 3 (BLOC1S3).